A 149-amino-acid chain; its full sequence is Large ribosomal subunit protein bL9 (149 aa).

Belongs to the bacterial ribosomal protein bL9 family.

Functionally, binds to the 23S rRNA. This chain is Large ribosomal subunit protein bL9, found in Geobacillus sp. (strain WCH70).